A 126-amino-acid polypeptide reads, in one-letter code: Protein ApaG (126 aa).

Positions 2 to 126 (SDPRYQIDVS…FRLAVPGALH (125 aa)) constitute an ApaG domain.

The polypeptide is Protein ApaG (Ectopseudomonas mendocina (strain ymp) (Pseudomonas mendocina)).